The chain runs to 156 residues: Phosphopantetheine adenylyltransferase (156 aa).

Threonine 9 contacts substrate. Residues 9–10 (TF) and histidine 17 each bind ATP. Residues lysine 41, leucine 73, and arginine 87 each coordinate substrate. ATP contacts are provided by residues 88 to 90 (GVR), glutamate 98, and 123 to 129 (WVFVSST).

Belongs to the bacterial CoaD family. Homohexamer. Requires Mg(2+) as cofactor.

It localises to the cytoplasm. The catalysed reaction is (R)-4'-phosphopantetheine + ATP + H(+) = 3'-dephospho-CoA + diphosphate. Its pathway is cofactor biosynthesis; coenzyme A biosynthesis; CoA from (R)-pantothenate: step 4/5. Functionally, reversibly transfers an adenylyl group from ATP to 4'-phosphopantetheine, yielding dephospho-CoA (dPCoA) and pyrophosphate. The polypeptide is Phosphopantetheine adenylyltransferase (Haemophilus influenzae (strain PittEE)).